Consider the following 268-residue polypeptide: Octanoyltransferase (268 aa).

In terms of domain architecture, BPL/LPL catalytic spans 73–261 (GEADELVWLL…AFEEVFGPAV (189 aa)). Substrate is bound by residues 112-119 (RGGEYTYH), 192-194 (ALG), and 205-207 (GLS). The Acyl-thioester intermediate role is filled by Cys-223.

Belongs to the LipB family.

Its subcellular location is the cytoplasm. The catalysed reaction is octanoyl-[ACP] + L-lysyl-[protein] = N(6)-octanoyl-L-lysyl-[protein] + holo-[ACP] + H(+). It functions in the pathway protein modification; protein lipoylation via endogenous pathway; protein N(6)-(lipoyl)lysine from octanoyl-[acyl-carrier-protein]: step 1/2. In terms of biological role, catalyzes the transfer of endogenously produced octanoic acid from octanoyl-acyl-carrier-protein onto the lipoyl domains of lipoate-dependent enzymes. Lipoyl-ACP can also act as a substrate although octanoyl-ACP is likely to be the physiological substrate. The chain is Octanoyltransferase from Agrobacterium fabrum (strain C58 / ATCC 33970) (Agrobacterium tumefaciens (strain C58)).